Consider the following 133-residue polypeptide: Holo-[acyl-carrier-protein] synthase (133 aa).

Residues D8 and E57 each coordinate Mg(2+).

Belongs to the P-Pant transferase superfamily. AcpS family. Requires Mg(2+) as cofactor.

The protein localises to the cytoplasm. The enzyme catalyses apo-[ACP] + CoA = holo-[ACP] + adenosine 3',5'-bisphosphate + H(+). Functionally, transfers the 4'-phosphopantetheine moiety from coenzyme A to a Ser of acyl-carrier-protein. The protein is Holo-[acyl-carrier-protein] synthase of Bartonella bacilliformis (strain ATCC 35685 / KC583 / Herrer 020/F12,63).